A 230-amino-acid polypeptide reads, in one-letter code: N-(5'-phosphoribosyl)anthranilate isomerase (230 aa).

Belongs to the TrpF family.

It catalyses the reaction N-(5-phospho-beta-D-ribosyl)anthranilate = 1-(2-carboxyphenylamino)-1-deoxy-D-ribulose 5-phosphate. Its pathway is amino-acid biosynthesis; L-tryptophan biosynthesis; L-tryptophan from chorismate: step 3/5. This is N-(5'-phosphoribosyl)anthranilate isomerase from Syntrophus aciditrophicus (strain SB).